The sequence spans 435 residues: UPF0597 protein ASA_0240 (435 aa).

This sequence belongs to the UPF0597 family.

The chain is UPF0597 protein ASA_0240 from Aeromonas salmonicida (strain A449).